Consider the following 293-residue polypeptide: Pseudouridine-5'-phosphate glycosidase (293 aa).

E21 (proton donor) is an active-site residue. The substrate site is built by K81 and V101. D130 lines the Mn(2+) pocket. 132–134 serves as a coordination point for substrate; the sequence is SQD. The active-site Nucleophile is the K151.

The protein belongs to the pseudouridine-5'-phosphate glycosidase family. As to quaternary structure, homotrimer. The cofactor is Mn(2+).

It catalyses the reaction D-ribose 5-phosphate + uracil = psi-UMP + H2O. In terms of biological role, catalyzes the reversible cleavage of pseudouridine 5'-phosphate (PsiMP) to ribose 5-phosphate and uracil. Functions biologically in the cleavage direction, as part of a pseudouridine degradation pathway. The protein is Pseudouridine-5'-phosphate glycosidase of Thermosipho africanus (strain TCF52B).